The sequence spans 139 residues: Large ribosomal subunit protein uL16 (139 aa).

Over residues 1 to 13 (MLQPARRKYRKEQ) the composition is skewed to basic residues. Residues 1–23 (MLQPARRKYRKEQKGRNTGISHS) are disordered.

It belongs to the universal ribosomal protein uL16 family. In terms of assembly, part of the 50S ribosomal subunit.

In terms of biological role, binds 23S rRNA and is also seen to make contacts with the A and possibly P site tRNAs. The protein is Large ribosomal subunit protein uL16 of Herminiimonas arsenicoxydans.